Consider the following 144-residue polypeptide: Actin-associated protein FAM107A (144 aa).

Positions 67–94 form a coiled coil; sequence LQRVLEHRRRNQLIKKKKEELEAKRLQC. The Nuclear localization signal motif lies at 74–84; the sequence is RRRNQLIKKKK. The tract at residues 105–124 is disordered; the sequence is QRLNQLEKPPEKEEDHAPEF. Basic and acidic residues predominate over residues 112–124; the sequence is KPPEKEEDHAPEF.

Belongs to the FAM107 family. Interacts with ACTB. Interacts with COMMD1; this interaction stabilizes COMMD1 in the nucleus. Interacts with MAP1A. Interacts with PRDX1. Interacts with F-actin.

It is found in the nucleus. The protein resides in the cytoplasm. Its subcellular location is the cytoskeleton. It localises to the stress fiber. The protein localises to the cell junction. It is found in the focal adhesion. The protein resides in the cell projection. Its subcellular location is the ruffle membrane. It localises to the synapse. Functionally, stress-inducible actin-binding protein that plays a role in synaptic and cognitive functions by modulating actin filamentous (F-actin) dynamics. Mediates polymerization of globular actin to F-actin. Also binds to, stabilizes and bundles F-actin. Involved in synaptic function by regulating neurite outgrowth in an actin-dependent manner and for the acquisition of hippocampus-dependent cognitive function, such as learning and long-term memory. Plays a role in the actin and microtubule cytoskeleton organization; negatively regulates focal adhesion (FA) assembly promoting malignant glial cell migration in an actin-, microtubule- and MAP1A-dependent manner. Also involved in neuroblastoma G1/S phase cell cycle progression and cell proliferation inhibition by stimulating ubiquitination of NF-kappa-B subunit RELA and NF-kappa-B degradation in a COMMD1- and actin-dependent manner. May play a role in tumor development. The protein is Actin-associated protein FAM107A (FAM107A) of Pan troglodytes (Chimpanzee).